A 403-amino-acid polypeptide reads, in one-letter code: Riboflavin biosynthesis protein RibBA (403 aa).

The segment at 1-204 is DHBP synthase; that stretch reads MKNKVFASIG…IGELVNYRRR (204 aa). D-ribulose 5-phosphate is bound by residues 30 to 31, D35, 143 to 147, and E167; these read RE and RTGHT. E31 is a Mg(2+) binding site. H146 serves as a coordination point for Mg(2+). Positions 205–403 are GTP cyclohydrolase II; it reads TEKFISEIVN…EKMGHMLKKV (199 aa). Residue 255-259 coordinates GTP; the sequence is RVHSS. Zn(2+) contacts are provided by C260, C271, and C273. GTP-binding positions include Q276, 298–300, and T320; that span reads EGR. D332 acts as the Proton acceptor; for GTP cyclohydrolase activity in catalysis. R334 (nucleophile; for GTP cyclohydrolase activity) is an active-site residue. 2 residues coordinate GTP: T355 and K360.

The protein in the N-terminal section; belongs to the DHBP synthase family. It in the C-terminal section; belongs to the GTP cyclohydrolase II family. Requires Mg(2+) as cofactor. It depends on Mn(2+) as a cofactor. Zn(2+) serves as cofactor.

It carries out the reaction D-ribulose 5-phosphate = (2S)-2-hydroxy-3-oxobutyl phosphate + formate + H(+). The catalysed reaction is GTP + 4 H2O = 2,5-diamino-6-hydroxy-4-(5-phosphoribosylamino)-pyrimidine + formate + 2 phosphate + 3 H(+). Its pathway is cofactor biosynthesis; riboflavin biosynthesis; 2-hydroxy-3-oxobutyl phosphate from D-ribulose 5-phosphate: step 1/1. It functions in the pathway cofactor biosynthesis; riboflavin biosynthesis; 5-amino-6-(D-ribitylamino)uracil from GTP: step 1/4. Its function is as follows. Catalyzes the conversion of D-ribulose 5-phosphate to formate and 3,4-dihydroxy-2-butanone 4-phosphate. In terms of biological role, catalyzes the conversion of GTP to 2,5-diamino-6-ribosylamino-4(3H)-pyrimidinone 5'-phosphate (DARP), formate and pyrophosphate. The polypeptide is Riboflavin biosynthesis protein RibBA (Endomicrobium trichonymphae).